Here is a 512-residue protein sequence, read N- to C-terminus: Histidine ammonia-lyase (512 aa).

The segment at residues 141–143 is a cross-link (5-imidazolinone (Ala-Gly)); that stretch reads ASG. S142 is modified (2,3-didehydroalanine (Ser)).

It belongs to the PAL/histidase family. Post-translationally, contains an active site 4-methylidene-imidazol-5-one (MIO), which is formed autocatalytically by cyclization and dehydration of residues Ala-Ser-Gly.

It localises to the cytoplasm. It carries out the reaction L-histidine = trans-urocanate + NH4(+). The protein operates within amino-acid degradation; L-histidine degradation into L-glutamate; N-formimidoyl-L-glutamate from L-histidine: step 1/3. The sequence is that of Histidine ammonia-lyase from Bacillus velezensis (strain DSM 23117 / BGSC 10A6 / LMG 26770 / FZB42) (Bacillus amyloliquefaciens subsp. plantarum).